Reading from the N-terminus, the 295-residue chain is MVRRLTSPRLEFEAAAIYEYPEHLHSFLNDLPTRPGVYLFHGESDTMPLYIGKSVNIRSRVLSHLRTPDEAAMLRQSRRISWICTAGEIGALLLEARLIKEQQPLFNKRLRRNRQLCALQLNEKRVDVVYAKEVDFSRAPNLFGLFANRRAALQALQSIADEQKLCYGLLGLEPLSRGRACFRSALKRCAGACCGKESHEEHALRLRQSLERLRVVCWPWQGAVALKEQHPEMTQYHIIQNWLWLGAVNSLEEATTLIRTPAGFDHDGYKILCKPLLSGNYEITELDPANDQRAS.

The region spanning 33–108 (TRPGVYLFHG…IKEQQPLFNK (76 aa)) is the GIY-YIG domain.

In terms of biological role, incises the DNA at the 3' side of a lesion during nucleotide excision repair. Incises the DNA farther away from the lesion than UvrC. Not able to incise the 5' site of a lesion. When a lesion remains because UvrC is not able to induce the 3' incision, Cho incises the DNA. Then UvrC makes the 5' incision. The combined action of Cho and UvrC broadens the substrate range of nucleotide excision repair. The sequence is that of Excinuclease cho (cho) from Shigella flexneri.